Reading from the N-terminus, the 470-residue chain is uncharacterized protein (470 aa).

The 69-residue stretch at 1–69 folds into the HTH gntR-type domain; the sequence is MTRYQHLATL…PRSGYFVAQR (69 aa). Lysine 313 carries the post-translational modification N6-(pyridoxal phosphate)lysine.

The protein in the C-terminal section; belongs to the class-I pyridoxal-phosphate-dependent aminotransferase family.

This is an uncharacterized protein from Escherichia coli (strain K12).